The sequence spans 510 residues: Holliday junction branch migration ATPase PINA (510 aa).

As to quaternary structure, homohexamer. Interacts with Holliday junction resolvase Hjc, interacts with helicase Hjm (Hel308).

The enzyme catalyses ATP + H2O = ADP + phosphate + H(+). In terms of biological role, important for growth at low temperatures (less than 65 degrees Celsius in this organism). Promotes Holliday junction (HJ) branch migration and unwinds Y-shaped DNA (but not replication forks or dsDNA) in an ATP hydrolysis-dependent manner. Stimulates cleavage by HJ resolvase Hjc. Hjc, Hjm (Hel308) and PINA coordinate HJ migration and cleavage of replication forks in a coordinated way. Probably acts as an ATP-dependent pump that pulls DNA through the hexamer. In Sulfolobus acidocaldarius (strain ATCC 33909 / DSM 639 / JCM 8929 / NBRC 15157 / NCIMB 11770), this protein is Holliday junction branch migration ATPase PINA.